The sequence spans 210 residues: HTH-type transcriptional regulator TtgR (210 aa).

Positions 10-70 (QETRAQIIEA…ALLDSLHETH (61 aa)) constitute an HTH tetR-type domain. The H-T-H motif DNA-binding region spans 33–52 (TLADIAELAGVTRGAIYWHF).

In terms of assembly, homodimer.

In terms of biological role, represses expression from the ttgABC operon promoter and its own expression. Binds to a promoter region between the divergently transcribed ttgR and ttgABC genes/operons; in the presence of chloramphenicol or tetracycline this binding no longer occurs and ttgR and ttgABC are derepressed. This suggests that TtgR binds these antibiotics. This Pseudomonas putida (strain DOT-T1E) protein is HTH-type transcriptional regulator TtgR (ttgR).